We begin with the raw amino-acid sequence, 443 residues long: Exodeoxyribonuclease 7 large subunit (443 aa).

It belongs to the XseA family. As to quaternary structure, heterooligomer composed of large and small subunits.

It is found in the cytoplasm. The enzyme catalyses Exonucleolytic cleavage in either 5'- to 3'- or 3'- to 5'-direction to yield nucleoside 5'-phosphates.. In terms of biological role, bidirectionally degrades single-stranded DNA into large acid-insoluble oligonucleotides, which are then degraded further into small acid-soluble oligonucleotides. This is Exodeoxyribonuclease 7 large subunit from Vibrio campbellii (strain ATCC BAA-1116).